The chain runs to 294 residues: MSNLKEIKRKIKSVHNTQKTTNAMKLVSTAKLKKAEEAAKRSKIYAQKIDEILSEISFQINKIVHNEDDVRLSLFHKKEQIKTVDLIFITADKGLCGGFNIKTLKTVSEMLKEYEAKNINIRLRAIGKTGIEYFNFQKIELLEKYFHLSSSPDYEKACEVIHAAVDDFLNGNTDEVILVHNGYKNMITQELKINHLIPVEPKSIEQTHNSLLELEPEGTELLKDLMKTYFEYNMYYALIDSLAAEHSARMQAMDNATNNAKARVKQLNLAYNKARQESITTELIEIISGVESMK.

The protein belongs to the ATPase gamma chain family. As to quaternary structure, F-type ATPases have 2 components, CF(1) - the catalytic core - and CF(0) - the membrane proton channel. CF(1) has five subunits: alpha(3), beta(3), gamma(1), delta(1), epsilon(1). CF(0) has three main subunits: a, b and c.

Its subcellular location is the cell inner membrane. Produces ATP from ADP in the presence of a proton gradient across the membrane. The gamma chain is believed to be important in regulating ATPase activity and the flow of protons through the CF(0) complex. This chain is ATP synthase gamma chain, found in Campylobacter jejuni subsp. jejuni serotype O:2 (strain ATCC 700819 / NCTC 11168).